A 614-amino-acid polypeptide reads, in one-letter code: Serine/threonine-protein kinase Pkn1 (614 aa).

Residues 13 to 276 (YKVIAELGHG…TSGEQLQVTL (264 aa)) form the Protein kinase domain. ATP contacts are provided by residues 19 to 27 (LGHGLWSRD) and Lys-42.

It belongs to the protein kinase superfamily. Ser/Thr protein kinase family. Interacts with PknD, interacts with and phosphorylates IncG. Autophosphorylates on serine and threonine residues. Present in elementary bodies 40 hours post-infection as 2 proteins of approximately 70 and 65 kDa; the smaller one may be due to differential phosphorylation or degradation.

It carries out the reaction L-seryl-[protein] + ATP = O-phospho-L-seryl-[protein] + ADP + H(+). The catalysed reaction is L-threonyl-[protein] + ATP = O-phospho-L-threonyl-[protein] + ADP + H(+). In terms of biological role, together with the serine/threonine kinase PknD, may play a role in specific interactions with host proteins during host intracellular growth. Autophosphorylates and phosphorylates IncG, an inclusion-membrane protein required for the modification of the nascent chlamydial inclusion. This Chlamydia trachomatis serovar L2 (strain ATCC VR-902B / DSM 19102 / 434/Bu) protein is Serine/threonine-protein kinase Pkn1 (pkn1).